A 113-amino-acid chain; its full sequence is Large ribosomal subunit protein P2B (113 aa).

Positions 66–113 are disordered; it reads PSGGGAIDMGAPAAVAGGGAAPAEEAKKEEKVEEKEESDEDMGFSLFD. The span at 89–99 shows a compositional bias: basic and acidic residues; that stretch reads EEAKKEEKVEE.

This sequence belongs to the eukaryotic ribosomal protein P1/P2 family. In terms of assembly, P1 and P2 exist as dimers at the large ribosomal subunit. In terms of processing, phosphorylated.

Plays an important role in the elongation step of protein synthesis. The sequence is that of Large ribosomal subunit protein P2B (RPP2B) from Zea mays (Maize).